A 179-amino-acid polypeptide reads, in one-letter code: Probable splicing factor, arginine/serine-rich 6 (179 aa).

In terms of domain architecture, RRM spans 3–76 (AKVYVGGLPS…VRARVELSTG (74 aa)). Positions 75 to 179 (TGQRRGGGGR…RSRSRSASPH (105 aa)) are disordered. Positions 78–93 (RRGGGGRGGGFGGRGG) are enriched in gly residues. Residues 94–160 (GGRDRSPYRG…RSPQERDRSH (67 aa)) are compositionally biased toward basic and acidic residues. Basic residues predominate over residues 161 to 173 (SKSRSRSRSRSRS).

Belongs to the splicing factor SR family. Post-translationally, extensively phosphorylated on serine residues in the RS domain.

It localises to the nucleus. In terms of biological role, plays a functionally redundant role in shifting germ cell sexual differentiation in hermaprodites. Required for the development of somatic gonad structures and for progression from larval stage to adulthood. This Caenorhabditis elegans protein is Probable splicing factor, arginine/serine-rich 6 (rsp-6).